Here is a 658-residue protein sequence, read N- to C-terminus: Glycogen debranching enzyme (658 aa).

The Nucleophile role is filled by Asp335. Residue Glu370 is the Proton donor of the active site.

It belongs to the glycosyl hydrolase 13 family.

It carries out the reaction Hydrolysis of (1-&gt;6)-alpha-D-glucosidic linkages to branches with degrees of polymerization of three or four glucose residues in limit dextrin.. Its pathway is glycan degradation; glycogen degradation. Removes maltotriose and maltotetraose chains that are attached by 1,6-alpha-linkage to the limit dextrin main chain, generating a debranched limit dextrin. This Erwinia tasmaniensis (strain DSM 17950 / CFBP 7177 / CIP 109463 / NCPPB 4357 / Et1/99) protein is Glycogen debranching enzyme.